The chain runs to 234 residues: MSSASMFGSLKTNAVDESQLKARIGVLALQGAFIEHINIMNSIDGVISFPVKTAKDCENIDGLIIPGGESTTIGKLINIDEKLRDRLEHLVDQGLPIWGTCAGMILLSKKSRGGKFPDPYLLRAMDIEVTRNYFGPQTMSFTTDITVTESMQFEATEPLHSFSATFIRAPVASTILSDDINVLATIVHEGNKEIVAVEQGPFLGTSFHPELTADNRWHEWWVKERVLPLKEKKD.

68 to 70 (GES) serves as a coordination point for L-glutamine. The active-site Nucleophile is Cys-101. Residues Arg-131 and 167–168 (IR) contribute to the L-glutamine site. Active-site charge relay system residues include His-208 and Glu-210.

It belongs to the glutaminase PdxT/SNO family.

The protein resides in the cytoplasm. The catalysed reaction is L-glutamine + H2O = L-glutamate + NH4(+). This is an uncharacterized protein from Schizosaccharomyces pombe (strain 972 / ATCC 24843) (Fission yeast).